Reading from the N-terminus, the 226-residue chain is Biosynthetic peptidoglycan transglycosylase (226 aa).

A helical transmembrane segment spans residues 5 to 25 (IGVTVLAVVGLLLLPYLLTPL).

It belongs to the glycosyltransferase 51 family.

It localises to the cell inner membrane. It catalyses the reaction [GlcNAc-(1-&gt;4)-Mur2Ac(oyl-L-Ala-gamma-D-Glu-L-Lys-D-Ala-D-Ala)](n)-di-trans,octa-cis-undecaprenyl diphosphate + beta-D-GlcNAc-(1-&gt;4)-Mur2Ac(oyl-L-Ala-gamma-D-Glu-L-Lys-D-Ala-D-Ala)-di-trans,octa-cis-undecaprenyl diphosphate = [GlcNAc-(1-&gt;4)-Mur2Ac(oyl-L-Ala-gamma-D-Glu-L-Lys-D-Ala-D-Ala)](n+1)-di-trans,octa-cis-undecaprenyl diphosphate + di-trans,octa-cis-undecaprenyl diphosphate + H(+). It participates in cell wall biogenesis; peptidoglycan biosynthesis. In terms of biological role, peptidoglycan polymerase that catalyzes glycan chain elongation from lipid-linked precursors. This Nitrobacter hamburgensis (strain DSM 10229 / NCIMB 13809 / X14) protein is Biosynthetic peptidoglycan transglycosylase.